The chain runs to 131 residues: MRHRNSNRKLNRTSSHRQAMLRNMANSLLRHEIIKTTLPKAKELRRVAEPLITLGKDATLANRRLAFSRLRDRDIVGKLFNELGPRYQTRNGGYLRILKCGFRVGDNAPMALVELVDRPELATDGEVVTAE.

The protein belongs to the bacterial ribosomal protein bL17 family. In terms of assembly, part of the 50S ribosomal subunit. Contacts protein L32.

The sequence is that of Large ribosomal subunit protein bL17 from Methylobacillus flagellatus (strain ATCC 51484 / DSM 6875 / VKM B-1610 / KT).